Reading from the N-terminus, the 476-residue chain is Bifunctional protein HldE (476 aa).

Positions 1–319 are ribokinase; the sequence is MKPTLPNYDQ…EAIHGSQDSG (319 aa). 195-198 contributes to the ATP binding site; sequence NMLE. D264 is an active-site residue. A cytidylyltransferase region spans residues 344–476; it reads MTNGCFDILH…IIEAIKGGRG (133 aa).

It in the N-terminal section; belongs to the carbohydrate kinase PfkB family. The protein in the C-terminal section; belongs to the cytidylyltransferase family. In terms of assembly, homodimer.

The catalysed reaction is D-glycero-beta-D-manno-heptose 7-phosphate + ATP = D-glycero-beta-D-manno-heptose 1,7-bisphosphate + ADP + H(+). The enzyme catalyses D-glycero-beta-D-manno-heptose 1-phosphate + ATP + H(+) = ADP-D-glycero-beta-D-manno-heptose + diphosphate. The protein operates within nucleotide-sugar biosynthesis; ADP-L-glycero-beta-D-manno-heptose biosynthesis; ADP-L-glycero-beta-D-manno-heptose from D-glycero-beta-D-manno-heptose 7-phosphate: step 1/4. It participates in nucleotide-sugar biosynthesis; ADP-L-glycero-beta-D-manno-heptose biosynthesis; ADP-L-glycero-beta-D-manno-heptose from D-glycero-beta-D-manno-heptose 7-phosphate: step 3/4. In terms of biological role, catalyzes the phosphorylation of D-glycero-D-manno-heptose 7-phosphate at the C-1 position to selectively form D-glycero-beta-D-manno-heptose-1,7-bisphosphate. Catalyzes the ADP transfer from ATP to D-glycero-beta-D-manno-heptose 1-phosphate, yielding ADP-D-glycero-beta-D-manno-heptose. In Aliivibrio fischeri (strain ATCC 700601 / ES114) (Vibrio fischeri), this protein is Bifunctional protein HldE.